A 1385-amino-acid polypeptide reads, in one-letter code: PsbD mRNA maturation factor Nac2, chloroplastic (1385 aa).

A chloroplast-targeting transit peptide spans 1–45; the sequence is MGALPCPAHIEHHQGLSSFGTRRVLRQSVACGAHRSRRRSLWAGA. Positions 132–152 are enriched in low complexity; sequence GPHGAASATGAGSHSSSAGAP. Disordered regions lie at residues 132–157, 263–282, 304–360, 387–502, 546–568, 726–756, and 840–899; these read GPHG…PTPR, AVAA…RSSA, TSSR…AAGP, RQQP…GHGQ, NGAG…SGTS, HADS…VAAA, and ARRA…APSA. Residues 271-281 are compositionally biased toward basic and acidic residues; that stretch reads QPHEHQQERSS. The span at 304–313 shows a compositional bias: low complexity; it reads TSSRRGGRSS. Residues 403–412 are compositionally biased toward gly residues; it reads NGSGKSGSGG. 4 stretches are compositionally biased toward low complexity: residues 448–464, 554–568, 729–744, and 854–893; these read APAA…RPAA, ASAS…SGTS, SSSS…SSSG, and ASTT…AAAG. TPR repeat units lie at residues 851 to 884, 951 to 984, 985 to 1018, 1019 to 1052, 1053 to 1086, 1091 to 1124, 1125 to 1158, 1160 to 1193, and 1205 to 1238; these read RRGA…DPAS, GAVM…CPAD, VALY…DRTD, KQLF…HPLN, TKII…DPLS, VHNR…HPNS, AALL…AGAF, AAVM…KQLN, and AWRA…APAV. 2 disordered regions span residues 1237–1257 and 1333–1385; these read AVRG…GRRP and IQDP…ADDM. Residues 1356 to 1365 show a composition bias toward acidic residues; it reads QDADYYEEPE. A compositionally biased stretch (basic and acidic residues) spans 1374–1385; it reads AVRRPMPDADDM.

As to quaternary structure, part of 2 complexes of about 600 and less than 2000 kDa, both of which also contain non-polysomal RNA.

The protein localises to the plastid. It localises to the chloroplast stroma. Its function is as follows. Involved, directly or indirectly, in the processing of the chloroplast encoded psbD mRNA to its mature form, acting via the 5'-UTR of the psbD mRNA. The last 588 amino acids of the protein are sufficient to confer stability on the transcript in vivo. The polypeptide is PsbD mRNA maturation factor Nac2, chloroplastic (NAC2) (Chlamydomonas reinhardtii (Chlamydomonas smithii)).